The primary structure comprises 865 residues: Bifunctional uridylyltransferase/uridylyl-removing enzyme (865 aa).

Positions 1 to 318 are uridylyltransferase; sequence MPHVDLNPLK…FPRPDSDARL (318 aa). The tract at residues 319 to 675 is uridylyl-removing; the sequence is IDDDFRNLRE…VRPTEHGEGL (357 aa). The HD domain maps to 437-559; the sequence is VDQHTLAVVR…VGDERRLAAL (123 aa). ACT domains lie at 676–762 and 789–865; these read QVMV…RLPH and RLSV…QQAA. The disordered stretch occupies residues 747 to 767; it reads DPHAARHAHAPRRLPHSHARR. The span at 751 to 767 shows a compositional bias: basic residues; that stretch reads ARHAHAPRRLPHSHARR.

It belongs to the GlnD family. Requires Mg(2+) as cofactor.

The catalysed reaction is [protein-PII]-L-tyrosine + UTP = [protein-PII]-uridylyl-L-tyrosine + diphosphate. It catalyses the reaction [protein-PII]-uridylyl-L-tyrosine + H2O = [protein-PII]-L-tyrosine + UMP + H(+). With respect to regulation, uridylyltransferase (UTase) activity is inhibited by glutamine, while glutamine activates uridylyl-removing (UR) activity. Functionally, modifies, by uridylylation and deuridylylation, the PII regulatory proteins (GlnB and homologs), in response to the nitrogen status of the cell that GlnD senses through the glutamine level. Under low glutamine levels, catalyzes the conversion of the PII proteins and UTP to PII-UMP and PPi, while under higher glutamine levels, GlnD hydrolyzes PII-UMP to PII and UMP (deuridylylation). Thus, controls uridylylation state and activity of the PII proteins, and plays an important role in the regulation of nitrogen assimilation and metabolism. The chain is Bifunctional uridylyltransferase/uridylyl-removing enzyme from Bordetella parapertussis (strain 12822 / ATCC BAA-587 / NCTC 13253).